The sequence spans 528 residues: GMP synthase [glutamine-hydrolyzing] (528 aa).

The region spanning 13 to 204 (SILILDFGSQ…VYKISCCAAD (192 aa)) is the Glutamine amidotransferase type-1 domain. The active-site Nucleophile is the Cys-90. Active-site residues include His-178 and Glu-180. The region spanning 205-403 (WTTETYIEET…LGLPAEIIKR (199 aa)) is the GMPS ATP-PPase domain. 232–238 (SGGVDSS) lines the ATP pocket.

Homodimer.

The enzyme catalyses XMP + L-glutamine + ATP + H2O = GMP + L-glutamate + AMP + diphosphate + 2 H(+). The protein operates within purine metabolism; GMP biosynthesis; GMP from XMP (L-Gln route): step 1/1. In terms of biological role, catalyzes the synthesis of GMP from XMP. The polypeptide is GMP synthase [glutamine-hydrolyzing] (Prochlorococcus marinus (strain MIT 9215)).